Consider the following 149-residue polypeptide: Large ribosomal subunit protein uL11 (149 aa).

It belongs to the universal ribosomal protein uL11 family. Part of the ribosomal stalk of the 50S ribosomal subunit. Interacts with L10 and the large rRNA to form the base of the stalk. L10 forms an elongated spine to which L12 dimers bind in a sequential fashion forming a multimeric L10(L12)X complex. Post-translationally, one or more lysine residues are methylated.

Forms part of the ribosomal stalk which helps the ribosome interact with GTP-bound translation factors. This is Large ribosomal subunit protein uL11 from Azorhizobium caulinodans (strain ATCC 43989 / DSM 5975 / JCM 20966 / LMG 6465 / NBRC 14845 / NCIMB 13405 / ORS 571).